A 341-amino-acid polypeptide reads, in one-letter code: Retinol dehydrogenase 10-A (341 aa).

A helical; Signal-anchor transmembrane segment spans residues 3-23 (IVLEFFLVTFRVLWAFVLAAG). 40-64 (LITGAGSGLGRLFALEFARRRAQLV) is a binding site for NADP(+). Serine 197 contacts substrate. The Proton acceptor role is filled by tyrosine 210.

The protein belongs to the short-chain dehydrogenases/reductases (SDR) family.

It is found in the microsome membrane. It localises to the endoplasmic reticulum membrane. It carries out the reaction all-trans-retinol + NADP(+) = all-trans-retinal + NADPH + H(+). It participates in cofactor metabolism; retinol metabolism. Retinol dehydrogenase with a clear preference for NADP. Converts all-trans-retinol to all-trans-retinal. Has no detectable activity towards 11-cis-retinol, 9-cis-retinol and 13-cis-retinol. The protein is Retinol dehydrogenase 10-A (rdh10-a) of Xenopus laevis (African clawed frog).